We begin with the raw amino-acid sequence, 583 residues long: L-galactono-1,4-lactone dehydrogenase 1, mitochondrial (583 aa).

The transit peptide at 1-36 directs the protein to the mitochondrion; it reads MRRLLLAGILRRASSSPSSHHHLHLVRALSASSPLP. The propeptide at 37–78 is removed in mature form; it reads ASDADLRKYAGYALLLLGCGAATYYSFPLPPDALHKKAVPFK. The chain crosses the membrane as a helical span at residues 45-61; sequence YAGYALLLLGCGAATYY. An FAD-binding PCMH-type domain is found at 95–266; that stretch reads THEVHTRVLL…AEVTLQCVER (172 aa).

FAD is required as a cofactor.

The protein localises to the mitochondrion membrane. The enzyme catalyses L-galactono-1,4-lactone + 4 Fe(III)-[cytochrome c] = L-dehydroascorbate + 4 Fe(II)-[cytochrome c] + 5 H(+). The protein operates within cofactor biosynthesis; L-ascorbate biosynthesis. Its function is as follows. Involved in the biosynthesis of ascorbic acid. The sequence is that of L-galactono-1,4-lactone dehydrogenase 1, mitochondrial (GLDH1) from Oryza sativa subsp. japonica (Rice).